The following is a 396-amino-acid chain: Elongation factor Tu (396 aa).

One can recognise a tr-type G domain in the interval 10–206; it reads KPHCNIGTIG…AVDAYIPQPE (197 aa). The interval 19–26 is G1; that stretch reads GHVDHGKT. Residue 19-26 coordinates GTP; the sequence is GHVDHGKT. Mg(2+) is bound at residue Thr26. Residues 60–64 form a G2 region; that stretch reads GITIS. The interval 81 to 84 is G3; that stretch reads DCPG. GTP-binding positions include 81–85 and 136–139; these read DCPGH and NKCD. The segment at 136-139 is G4; the sequence is NKCD. The tract at residues 174 to 176 is G5; the sequence is SAL.

The protein belongs to the TRAFAC class translation factor GTPase superfamily. Classic translation factor GTPase family. EF-Tu/EF-1A subfamily. As to quaternary structure, monomer.

It localises to the cytoplasm. The catalysed reaction is GTP + H2O = GDP + phosphate + H(+). Its function is as follows. GTP hydrolase that promotes the GTP-dependent binding of aminoacyl-tRNA to the A-site of ribosomes during protein biosynthesis. This is Elongation factor Tu from Nitrobacter hamburgensis (strain DSM 10229 / NCIMB 13809 / X14).